Here is an 80-residue protein sequence, read N- to C-terminus: Conotoxin Cl9.5 (80 aa).

An N-terminal signal peptide occupies residues 1–23; sequence MNCYLILTVALLLTSAMTGTTTA. A propeptide spanning residues 24 to 37 is cleaved from the precursor; the sequence is GQLNTKGVTLREDD. Disulfide bonds link Cys42-Cys59, Cys47-Cys69, and Cys49-Cys74.

Expressed by the venom duct.

The protein resides in the secreted. The chain is Conotoxin Cl9.5 from Californiconus californicus (California cone).